A 344-amino-acid chain; its full sequence is GTP 3',8-cyclase (344 aa).

The region spanning 19–245 is the Radical SAM core domain; the sequence is PFGRAVTYLR…DIPYRTGGPA (227 aa). Residue Arg-28 coordinates GTP. [4Fe-4S] cluster is bound by residues Cys-35 and Cys-39. Residue Tyr-41 coordinates S-adenosyl-L-methionine. Cys-42 is a [4Fe-4S] cluster binding site. Residue Arg-77 participates in GTP binding. Gly-81 contacts S-adenosyl-L-methionine. Thr-111 lines the GTP pocket. Ser-135 is an S-adenosyl-L-methionine binding site. Residue Lys-171 coordinates GTP. Met-205 serves as a coordination point for S-adenosyl-L-methionine. Residues Cys-268 and Cys-271 each coordinate [4Fe-4S] cluster. 273 to 275 provides a ligand contact to GTP; sequence RVR. Cys-285 is a binding site for [4Fe-4S] cluster.

The protein belongs to the radical SAM superfamily. MoaA family. As to quaternary structure, monomer and homodimer. Requires [4Fe-4S] cluster as cofactor.

It catalyses the reaction GTP + AH2 + S-adenosyl-L-methionine = (8S)-3',8-cyclo-7,8-dihydroguanosine 5'-triphosphate + 5'-deoxyadenosine + L-methionine + A + H(+). Its pathway is cofactor biosynthesis; molybdopterin biosynthesis. In terms of biological role, catalyzes the cyclization of GTP to (8S)-3',8-cyclo-7,8-dihydroguanosine 5'-triphosphate. In Brucella ovis (strain ATCC 25840 / 63/290 / NCTC 10512), this protein is GTP 3',8-cyclase.